Reading from the N-terminus, the 276-residue chain is SKA complex subunit 1 homolog (276 aa).

Positions 48-78 (VDVSLTAMEAQLQAVRRRLQEEREAFPKAKK) form a coiled coil.

The protein belongs to the SKA1 family.

This chain is SKA complex subunit 1 homolog, found in Oryza sativa subsp. indica (Rice).